The chain runs to 403 residues: Phosphoserine phosphatase RsbP (403 aa).

Positions Met1 to Gln42 constitute a PAS domain. The 212-residue stretch at Gln191 to Val402 folds into the PPM-type phosphatase domain.

Requires Mn(2+) as cofactor.

The enzyme catalyses O-phospho-L-serine + H2O = L-serine + phosphate. It catalyses the reaction O-phospho-D-serine + H2O = D-serine + phosphate. Functionally, positive regulator of sigma-B activity. Dephosphorylates RsbV in response to energy stress. This is Phosphoserine phosphatase RsbP (rsbP) from Bacillus subtilis (strain 168).